The following is a 349-amino-acid chain: S-adenosylmethionine decarboxylase proenzyme 3 (349 aa).

Catalysis depends on residues Glu9 and Glu12. Glu68 contributes to the substrate binding site. Catalysis depends on Ser69, which acts as the Schiff-base intermediate with substrate; via pyruvic acid. Residue Ser69 is modified to Pyruvic acid (Ser); by autocatalysis. The Proton donor; for catalytic activity role is filled by Cys83. Catalysis depends on proton acceptor; for processing activity residues Ser235 and His248. Residue Glu252 participates in substrate binding.

Belongs to the eukaryotic AdoMetDC family. Pyruvate serves as cofactor. Is synthesized initially as an inactive proenzyme. Formation of the active enzyme involves a self-maturation process in which the active site pyruvoyl group is generated from an internal serine residue via an autocatalytic post-translational modification. Two non-identical subunits are generated from the proenzyme in this reaction, and the pyruvate is formed at the N-terminus of the alpha chain, which is derived from the carboxyl end of the proenzyme. The post-translation cleavage follows an unusual pathway, termed non-hydrolytic serinolysis, in which the side chain hydroxyl group of the serine supplies its oxygen atom to form the C-terminus of the beta chain, while the remainder of the serine residue undergoes an oxidative deamination to produce ammonia and the pyruvoyl group blocking the N-terminus of the alpha chain.

The enzyme catalyses S-adenosyl-L-methionine + H(+) = S-adenosyl 3-(methylsulfanyl)propylamine + CO2. The protein operates within amine and polyamine biosynthesis; S-adenosylmethioninamine biosynthesis; S-adenosylmethioninamine from S-adenosyl-L-methionine: step 1/1. Functionally, essential for biosynthesis of the polyamines spermidine and spermine. Essential for polyamine homeostasis, and normal plant embryogenesis, growth and development. This chain is S-adenosylmethionine decarboxylase proenzyme 3, found in Arabidopsis thaliana (Mouse-ear cress).